A 203-amino-acid chain; its full sequence is Small ribosomal subunit protein uS4 (203 aa).

One can recognise an S4 RNA-binding domain in the interval 93-156 (RRLDNVVYRL…MKVPAILEAV (64 aa)).

Belongs to the universal ribosomal protein uS4 family. As to quaternary structure, part of the 30S ribosomal subunit. Contacts protein S5. The interaction surface between S4 and S5 is involved in control of translational fidelity.

In terms of biological role, one of the primary rRNA binding proteins, it binds directly to 16S rRNA where it nucleates assembly of the body of the 30S subunit. With S5 and S12 plays an important role in translational accuracy. This chain is Small ribosomal subunit protein uS4, found in Streptococcus agalactiae serotype Ia (strain ATCC 27591 / A909 / CDC SS700).